Consider the following 250-residue polypeptide: UPF0259 membrane protein Spro_2675 (250 aa).

Transmembrane regions (helical) follow at residues 23-43, 87-107, 132-152, 156-176, 192-212, and 222-242; these read ILML…AFSP, AATF…LTLI, LLLL…LFVV, IMAI…KGVF, VIVP…FMVS, and ASVV…IYLF.

The protein belongs to the UPF0259 family.

The protein resides in the cell inner membrane. This chain is UPF0259 membrane protein Spro_2675, found in Serratia proteamaculans (strain 568).